The sequence spans 374 residues: Cysteine-type anaerobic sulfatase-maturating enzyme (374 aa).

Residues 1 to 227 (MKSLSMLIKP…LNKLFDLWFK (227 aa)) enclose the Radical SAM core domain. Residues Cys15 and Cys19 each contribute to the [4Fe-4S] cluster site. Tyr21 provides a ligand contact to S-adenosyl-L-methionine. A [4Fe-4S] cluster-binding site is contributed by Cys22. Positions 66, 122, 134, and 195 each coordinate S-adenosyl-L-methionine. Positions 255, 261, and 276 each coordinate [4Fe-4S] cluster. Asp277 acts as the Proton acceptor in catalysis. [4Fe-4S] cluster-binding residues include Cys317, Cys320, Cys326, Cys330, and Cys348.

Belongs to the radical SAM superfamily. Anaerobic sulfatase-maturating enzyme family. [4Fe-4S] cluster is required as a cofactor.

The enzyme catalyses L-cysteinyl-[sulfatase] + S-adenosyl-L-methionine + H2O = 3-oxo-L-alanyl-[sulfatase] + hydrogen sulfide + 5'-deoxyadenosine + L-methionine + 2 H(+). Its pathway is protein modification; sulfatase oxidation. Involved in 'Cys-type' sulfatase maturation under anaerobic conditions. Catalyzes the post-translational modification of cysteine into 3-oxoalanine (also known as C(alpha)-formylglycine (FGly)), by a free radical chemical mechanism initiated via the reductive cleavage of S-adenosyl-L-methionine (SAM). This is Cysteine-type anaerobic sulfatase-maturating enzyme from Clostridium novyi (strain NT).